We begin with the raw amino-acid sequence, 313 residues long: Dehydrodolichyl diphosphate synthase CPT5, chloroplastic (313 aa).

The N-terminal 42 residues, 1 to 42 (MAFSFQLQQVFPFPVKFCSQPKSIKLQIFPNLTKRLPIHPLA), are a transit peptide targeting the chloroplast. The active site involves aspartate 89.

Belongs to the UPP synthase family. Mg(2+) is required as a cofactor. As to expression, expressed in leaf trichomes, stem trichomes and old leaves. Expressed at low levels in young leaves and flowers.

Its subcellular location is the plastid. The protein localises to the chloroplast. It catalyses the reaction n isopentenyl diphosphate + (2E,6E)-farnesyl diphosphate = a di-trans,poly-cis-polyprenyl diphosphate + n diphosphate. Functionally, catalyzes cis-prenyl chain elongation to produce the polyprenyl backbone of dolichol, a glycosyl carrier-lipid required for the biosynthesis of several classes of glycoprotein. The polypeptide is Dehydrodolichyl diphosphate synthase CPT5, chloroplastic (Solanum lycopersicum (Tomato)).